Reading from the N-terminus, the 140-residue chain is Small ribosomal subunit protein uS11c (140 aa).

It belongs to the universal ribosomal protein uS11 family. Part of the 30S ribosomal subunit.

It is found in the plastid. It localises to the chloroplast. The polypeptide is Small ribosomal subunit protein uS11c (Pelargonium hortorum (Common geranium)).